The sequence spans 95 residues: Small ribosomal subunit protein uS19 (95 aa).

This sequence belongs to the universal ribosomal protein uS19 family.

In terms of biological role, protein S19 forms a complex with S13 that binds strongly to the 16S ribosomal RNA. The sequence is that of Small ribosomal subunit protein uS19 from Thermotoga sp. (strain RQ2).